The chain runs to 391 residues: Eukaryotic initiation factor 4A-3 (391 aa).

Positions 18–46 (ASFAEMGIKDDLLRGVYQYGFEKPSAIQQ) match the Q motif motif. One can recognise a Helicase ATP-binding domain in the interval 49–219 (VLPIISGRDV…SKFMTDPVRI (171 aa)). ATP is bound at residue 62–69 (AQSGTGKT). The short motif at 167–170 (DESD) is the DEAD box element. In terms of domain architecture, Helicase C-terminal spans 230–391 (GIKQFFVAVE…EMPMNVADLI (162 aa)).

This sequence belongs to the DEAD box helicase family. eIF4A subfamily. As to quaternary structure, eIF4F is a multi-subunit complex, the composition of which varies with external and internal environmental conditions. It is composed of at least EIF4A, EIF4E and EIF4G.

It carries out the reaction ATP + H2O = ADP + phosphate + H(+). ATP-dependent RNA helicase which is a subunit of the eIF4F complex involved in cap recognition and is required for mRNA binding to ribosome. In the current model of translation initiation, eIF4A unwinds RNA secondary structures in the 5'-UTR of mRNAs which is necessary to allow efficient binding of the small ribosomal subunit, and subsequent scanning for the initiator codon. This is Eukaryotic initiation factor 4A-3 from Nicotiana plumbaginifolia (Leadwort-leaved tobacco).